A 178-amino-acid chain; its full sequence is Inner membrane-spanning protein YciB (178 aa).

The next 5 helical transmembrane spans lie at 10 to 30, 47 to 67, 76 to 96, 121 to 141, and 151 to 171; these read IVLF…AVLM, LQTM…LTLA, WKPT…LWAL, WAWI…VLHW, and LWGY…IAPH.

This sequence belongs to the YciB family.

It localises to the cell inner membrane. Its function is as follows. Plays a role in cell envelope biogenesis, maintenance of cell envelope integrity and membrane homeostasis. The protein is Inner membrane-spanning protein YciB of Verminephrobacter eiseniae (strain EF01-2).